The primary structure comprises 878 residues: Probable receptor-like protein kinase At4g39110 (878 aa).

Residues 1–43 (MEIRKKPNIFTVLVIDFSSKPSMALLLAILLFLSGPSASAVAA) form the signal peptide. Topologically, residues 44 to 440 (AAVGPATGFK…GRTTGMGKHG (397 aa)) are extracellular. Asparagine 170, asparagine 183, asparagine 254, asparagine 317, and asparagine 382 each carry an N-linked (GlcNAc...) asparagine glycan. Residues 441–461 (MVATAGFVMMFGAFIGLGAMV) traverse the membrane as a helical segment. The Cytoplasmic portion of the chain corresponds to 462–878 (YKWKKRPQDW…FTQFANLNGR (417 aa)). The region spanning 526–798 (FEASQIIGVG…GDVLWNLEYA (273 aa)) is the Protein kinase domain. ATP is bound by residues 532–540 (IGVGGFGNV) and lysine 554. Aspartate 650 (proton acceptor) is an active-site residue. The segment at 808 to 844 (GKAEETENAKPDVVTPGSVPVSDPSPITPSVTTNEAA) is disordered.

Belongs to the protein kinase superfamily. Ser/Thr protein kinase family.

The protein resides in the membrane. The protein is Probable receptor-like protein kinase At4g39110 of Arabidopsis thaliana (Mouse-ear cress).